We begin with the raw amino-acid sequence, 171 residues long: tRNA-splicing endonuclease (171 aa).

Active-site residues include Tyr-110, His-117, and Lys-148.

Belongs to the tRNA-intron endonuclease family. Archaeal short subfamily. Homotetramer; although the tetramer contains four active sites, only two participate in the cleavage. Therefore, it should be considered as a dimer of dimers.

It carries out the reaction pretRNA = a 3'-half-tRNA molecule with a 5'-OH end + a 5'-half-tRNA molecule with a 2',3'-cyclic phosphate end + an intron with a 2',3'-cyclic phosphate and a 5'-hydroxyl terminus.. Endonuclease that removes tRNA introns. Cleaves pre-tRNA at the 5'- and 3'-splice sites to release the intron. The products are an intron and two tRNA half-molecules bearing 2',3' cyclic phosphate and 5'-OH termini. Recognizes a pseudosymmetric substrate in which 2 bulged loops of 3 bases are separated by a stem of 4 bp. The sequence is that of tRNA-splicing endonuclease from Thermococcus onnurineus (strain NA1).